A 99-amino-acid polypeptide reads, in one-letter code: Protein Frey (99 aa).

Residues 7-29 (GALYPRAGLSLFLLYLVLAAVLL) form a helical membrane-spanning segment. A disordered region spans residues 65-88 (PKHPWPRGPRPLLSRAQQRKRDGP).

In terms of assembly, interacts with SPPL2C (via active sites); the interaction stabilizes FREY1 protein and inhibits SPPL2C proteolytic activity. Interacts with IZUMO1; the interaction retains IZUMO1 at the endoplasmic reticulum membrane and coordinates IZUMO1 complex assembly.

It is found in the endoplasmic reticulum membrane. In terms of biological role, key regulator for male fertility expressed transiently in round spermatids where it recruits IZUMO1 at the endoplasmic reticulum (ER) membrane and coordinates the oolemmal binding multimeric complex (IZUMO1 complex) assembly. Upon complete assembly of the IZUMO1 complex, its ER retention is released, facilitating IZUMO1 complex export to the acrosome. Through the interaction with SPPL2C, inhibits its intramembrane protease activity directly accessing the catalytic center of an I-CLiP. The polypeptide is Protein Frey (Ailuropoda melanoleuca (Giant panda)).